Consider the following 524-residue polypeptide: Ribonuclease Y (524 aa).

Residues 3–23 traverse the membrane as a helical segment; sequence IVINLFLLVPASIVFFAAGFF. The tract at residues 96-127 is disordered; the sequence is QQREGQLKKQAQDNRDMERRLQDQRKENEQVQ. Over residues 100 to 124 the composition is skewed to basic and acidic residues; sequence GQLKKQAQDNRDMERRLQDQRKENE. The KH domain maps to 214 to 280; the sequence is ALSVVHIQTD…KLTLQKLLSE (67 aa). Positions 340-432 constitute an HD domain; sequence LLQHSREVAM…VDAANVISLS (93 aa).

This sequence belongs to the RNase Y family.

The protein resides in the cell membrane. Endoribonuclease that initiates mRNA decay. The chain is Ribonuclease Y from Chlorobium phaeovibrioides (strain DSM 265 / 1930) (Prosthecochloris vibrioformis (strain DSM 265)).